A 121-amino-acid chain; its full sequence is UPF0295 protein ABC1323 (121 aa).

2 helical membrane-spanning segments follow: residues T14–K34 and V41–I61.

This sequence belongs to the UPF0295 family.

The protein localises to the cell membrane. The sequence is that of UPF0295 protein ABC1323 from Shouchella clausii (strain KSM-K16) (Alkalihalobacillus clausii).